A 689-amino-acid chain; its full sequence is Glycine--tRNA ligase beta subunit (689 aa).

Belongs to the class-II aminoacyl-tRNA synthetase family. In terms of assembly, tetramer of two alpha and two beta subunits.

It is found in the cytoplasm. The enzyme catalyses tRNA(Gly) + glycine + ATP = glycyl-tRNA(Gly) + AMP + diphosphate. The chain is Glycine--tRNA ligase beta subunit from Coxiella burnetii (strain Dugway 5J108-111).